We begin with the raw amino-acid sequence, 423 residues long: Serine hydroxymethyltransferase (423 aa).

Residues L120 and 124–126 (GHL) each bind (6S)-5,6,7,8-tetrahydrofolate. K229 carries the N6-(pyridoxal phosphate)lysine modification. Residue 353 to 355 (SPF) coordinates (6S)-5,6,7,8-tetrahydrofolate.

Belongs to the SHMT family. In terms of assembly, homodimer. Pyridoxal 5'-phosphate is required as a cofactor.

Its subcellular location is the cytoplasm. The catalysed reaction is (6R)-5,10-methylene-5,6,7,8-tetrahydrofolate + glycine + H2O = (6S)-5,6,7,8-tetrahydrofolate + L-serine. It participates in one-carbon metabolism; tetrahydrofolate interconversion. It functions in the pathway amino-acid biosynthesis; glycine biosynthesis; glycine from L-serine: step 1/1. Functionally, catalyzes the reversible interconversion of serine and glycine with tetrahydrofolate (THF) serving as the one-carbon carrier. This reaction serves as the major source of one-carbon groups required for the biosynthesis of purines, thymidylate, methionine, and other important biomolecules. Also exhibits THF-independent aldolase activity toward beta-hydroxyamino acids, producing glycine and aldehydes, via a retro-aldol mechanism. The chain is Serine hydroxymethyltransferase from Prochlorococcus marinus (strain AS9601).